We begin with the raw amino-acid sequence, 319 residues long: Acetyl-coenzyme A carboxylase carboxyl transferase subunit alpha (319 aa).

The CoA carboxyltransferase C-terminal domain maps to 32-293; it reads NVDTEVRALE…KAVLLNELEA (262 aa).

The protein belongs to the AccA family. Acetyl-CoA carboxylase is a heterohexamer composed of biotin carboxyl carrier protein (AccB), biotin carboxylase (AccC) and two subunits each of ACCase subunit alpha (AccA) and ACCase subunit beta (AccD).

The protein localises to the cytoplasm. It catalyses the reaction N(6)-carboxybiotinyl-L-lysyl-[protein] + acetyl-CoA = N(6)-biotinyl-L-lysyl-[protein] + malonyl-CoA. Its pathway is lipid metabolism; malonyl-CoA biosynthesis; malonyl-CoA from acetyl-CoA: step 1/1. Functionally, component of the acetyl coenzyme A carboxylase (ACC) complex. First, biotin carboxylase catalyzes the carboxylation of biotin on its carrier protein (BCCP) and then the CO(2) group is transferred by the carboxyltransferase to acetyl-CoA to form malonyl-CoA. The sequence is that of Acetyl-coenzyme A carboxylase carboxyl transferase subunit alpha from Xylella fastidiosa (strain 9a5c).